Reading from the N-terminus, the 550-residue chain is Spermatogenesis-associated protein 2 (550 aa).

A PUB domain is found at 83–156 (TVGTAFATLE…YNVRDHPGGA (74 aa)). Positions 320–337 (YHLSSLDEVDLYTERGLG) match the PIM motif motif. The interval 457 to 480 (SKPVGSGPSPVGSLVSSGSSSSGG) is disordered.

It belongs to the SPATA2 family.

The protein resides in the cytoplasm. Its subcellular location is the nucleus. In terms of biological role, bridging factor that mediates the recruitment of cyld to the LUBAC complex, thereby regulating TNF-alpha-induced necroptosis. Required to activate the 'Met-1'- (linear) and 'Lys-63'-linked deubiquitinase activities of cyld. This is Spermatogenesis-associated protein 2 from Danio rerio (Zebrafish).